The following is a 590-amino-acid chain: Myo-inositol transporter 3 (590 aa).

The segment covering 1 to 26 has biased composition (basic and acidic residues); sequence MRTTHIEDRDNNSLENKHTDHIEGVE. Residues 1–40 form a disordered region; that stretch reads MRTTHIEDRDNNSLENKHTDHIEGVENGKGTQEPPSPSGF. Topologically, residues 1-57 are cytoplasmic; it reads MRTTHIEDRDNNSLENKHTDHIEGVENGKGTQEPPSPSGFGGHLIDENLVHVEGEDK. A helical membrane pass occupies residues 58 to 78; sequence VTWYLCFLISASAIAGFLFGY. The Extracellular portion of the chain corresponds to 79 to 105; the sequence is DTGVVGVALPLVGTDLGGNELNSSQQE. Residue N100 is glycosylated (N-linked (GlcNAc...) asparagine). A helical membrane pass occupies residues 106 to 126; it reads IITAGTTIGAIFGSAILGGWG. Over 127–132 the chain is Cytoplasmic; it reads DHLGRK. Residues 133-153 form a helical membrane-spanning segment; it reads MAILISDVFFTVGAVIIASSY. Residues 154–157 are Extracellular-facing; the sequence is SVPQ. Residues 158–178 form a helical membrane-spanning segment; it reads IIVGRIVLGVGVGGAAVIAPL. At 179–192 the chain is on the cytoplasmic side; sequence FITETAPTAVRGRC. A helical membrane pass occupies residues 193 to 213; the sequence is IGVNAFFIPFGQLVADSIGAG. Over 214 to 222 the chain is Extracellular; sequence VQNMHGGWR. A helical transmembrane segment spans residues 223 to 243; the sequence is LLFALGAVPSLIQLLLFHYLP. The Cytoplasmic portion of the chain corresponds to 244 to 325; sequence ESPRILIVKG…AVSVLQAAGQ (82 aa). The chain crosses the membrane as a helical span at residues 326-346; it reads LCGFNTLLYYAGTLFGLLGLS. Residues 347–349 are Extracellular-facing; the sequence is NPA. A helical transmembrane segment spans residues 350-370; it reads LGGLIPAGTNAVFVLIGMSTV. Topologically, residues 371-376 are cytoplasmic; sequence DKIGRR. Residues 377 to 397 form a helical membrane-spanning segment; that stretch reads GLLLVGVPVLLLGLVWNIIGF. Over 398-420 the chain is Extracellular; that stretch reads YYMCKPTGGFLDTSYSYDTTNVG. A helical membrane pass occupies residues 421–441; the sequence is IVIGGIVFYVAGFGLTYSHLV. Topologically, residues 442–455 are cytoplasmic; that stretch reads WYQAEYLALEVRSM. The helical transmembrane segment at 456-476 threads the bilayer; it reads GSGVATTVCWIANLVVSVSYL. The Extracellular segment spans residues 477–485; it reads SELETMTPS. A helical membrane pass occupies residues 486-506; that stretch reads GTYGFYLGLSVIAFVFVVFCF. Topologically, residues 507–590 are cytoplasmic; the sequence is PETKQLSIDE…GGKRKPQVLV (84 aa).

It belongs to the major facilitator superfamily. Sugar transporter (TC 2.A.1.1) family.

Its subcellular location is the cell membrane. The enzyme catalyses myo-inositol(out) + H(+)(out) = myo-inositol(in) + H(+)(in). Functionally, transporter for myo-inositol. The protein is Myo-inositol transporter 3 of Cryptococcus neoformans var. grubii serotype A (strain H99 / ATCC 208821 / CBS 10515 / FGSC 9487) (Filobasidiella neoformans var. grubii).